The sequence spans 103 residues: Large ribosomal subunit protein bL25 (103 aa).

The protein belongs to the bacterial ribosomal protein bL25 family. As to quaternary structure, part of the 50S ribosomal subunit; part of the 5S rRNA/L5/L18/L25 subcomplex. Contacts the 5S rRNA. Binds to the 5S rRNA independently of L5 and L18.

This is one of the proteins that binds to the 5S RNA in the ribosome where it forms part of the central protuberance. This is Large ribosomal subunit protein bL25 from Blochmanniella floridana.